We begin with the raw amino-acid sequence, 188 residues long: NADH-quinone oxidoreductase subunit I 2 (188 aa).

4Fe-4S ferredoxin-type domains lie at 56–88 (HFLK…VVPY) and 98–127 (AKFE…LGQQ). 8 residues coordinate [4Fe-4S] cluster: C68, C71, C74, C78, C107, C110, C113, and C117.

This sequence belongs to the complex I 23 kDa subunit family. NDH-1 is composed of 14 different subunits. Subunits NuoA, H, J, K, L, M, N constitute the membrane sector of the complex. [4Fe-4S] cluster serves as cofactor.

The protein resides in the cell inner membrane. The enzyme catalyses a quinone + NADH + 5 H(+)(in) = a quinol + NAD(+) + 4 H(+)(out). Functionally, NDH-1 shuttles electrons from NADH, via FMN and iron-sulfur (Fe-S) centers, to quinones in the respiratory chain. The immediate electron acceptor for the enzyme in this species is believed to be ubiquinone. Couples the redox reaction to proton translocation (for every two electrons transferred, four hydrogen ions are translocated across the cytoplasmic membrane), and thus conserves the redox energy in a proton gradient. This Rhizobium etli (strain ATCC 51251 / DSM 11541 / JCM 21823 / NBRC 15573 / CFN 42) protein is NADH-quinone oxidoreductase subunit I 2.